The following is a 490-amino-acid chain: Betaine aldehyde dehydrogenase (490 aa).

The K(+) site is built by Thr-26, Ile-27, and Asp-93. 150–152 (GAW) serves as a coordination point for NAD(+). The active-site Charge relay system is Lys-162. 176-179 (KPSE) is an NAD(+) binding site. Val-180 provides a ligand contact to K(+). Residue 230–233 (GVAS) participates in NAD(+) binding. Residue Leu-246 coordinates K(+). The active-site Proton acceptor is the Glu-252. NAD(+) is bound by residues Gly-254, Cys-286, and Glu-387. The Nucleophile role is filled by Cys-286. Cys-286 bears the Cysteine sulfenic acid (-SOH) mark. K(+)-binding residues include Lys-457 and Gly-460. The Charge relay system role is filled by Glu-464.

This sequence belongs to the aldehyde dehydrogenase family. As to quaternary structure, dimer of dimers. The cofactor is K(+).

The catalysed reaction is betaine aldehyde + NAD(+) + H2O = glycine betaine + NADH + 2 H(+). It functions in the pathway amine and polyamine biosynthesis; betaine biosynthesis via choline pathway; betaine from betaine aldehyde: step 1/1. Involved in the biosynthesis of the osmoprotectant glycine betaine. Catalyzes the irreversible oxidation of betaine aldehyde to the corresponding acid. The protein is Betaine aldehyde dehydrogenase of Escherichia coli O8 (strain IAI1).